The primary structure comprises 522 residues: Cyclic GMP-AMP synthase (522 aa).

A disordered region spans residues 1 to 144; it reads MQPWHGKAMQ…PPGPWDVPSP (144 aa). 2 DNA-binding regions span residues 1–160 and 173–215; these read MQPW…DAAP and KLSR…GSYY. K7 carries the post-translational modification N6-acetyllysine. S13 carries the post-translational modification Phosphoserine. N6-acetyllysine is present on K21. Position 37 is a phosphoserine (S37). N6-acetyllysine occurs at positions 47, 50, 56, 62, and 63. A Phosphoserine modification is found at S64. Residues 64 to 73 are compositionally biased toward basic and acidic residues; that stretch reads SAPDTQERPP. The segment at 64-75 is required for association with the cell membrane; it reads SAPDTQERPPVR. The residue at position 68 (T68) is a Phosphothreonine. 2 positions are modified to N6-acetyllysine: K82 and K83. The segment covering 88 to 97 has biased composition (polar residues); it reads AQDTQPSDAT. T91 is modified (phosphothreonine). S98, S116, and S129 each carry phosphoserine. The span at 98–118 shows a compositional bias: low complexity; the sequence is SAPGAEGLEPPAAREPALSRA. The segment at 120–160 is required for activation upon DNA viral infection; sequence SCRQRGARCSTKPRPPPGPWDVPSPGLPVSAPILVRRDAAP. An N6-lactoyllysine modification is found at K131. Residues 132–144 show a composition bias toward pro residues; sequence PRPPPGPWDVPSP. Residue S143 is modified to Phosphoserine. The Nuclear export signal signature appears at 169 to 174; that stretch reads LEKLKL. A Glycyl lysine isopeptide (Lys-Gly) (interchain with G-Cter in ubiquitin) cross-link involves residue K173. Position 191 is a polyADP-ribosyl aspartic acid (D191). The residue at position 210 (N210) is a (Microbial infection) Deamidated asparagine; by herpes simplex virus 1/HHV-1 UL37. T211 contacts GTP. Residue S213 is modified to Phosphoserine. Residue S213 participates in ATP binding. Y215 carries the post-translational modification Phosphotyrosine; by BLK. Mg(2+) contacts are provided by E225 and D227. Residue 225-227 participates in ATP binding; it reads EFD. D227 contributes to the 2',3'-cGAMP binding site. K231 participates in a covalent cross-link: Glycyl lysine isopeptide (Lys-Gly) (interchain with G-Cter in SUMO). Residue K285 forms a Glycyl lysine isopeptide (Lys-Gly) (interchain with G-Cter in ubiquitin) linkage. The residue at position 286 (E286) is a 5-glutamyl polyglutamate. The Nuclear localization signal motif lies at 295-305; that stretch reads DVIMKRKRGGS. A KRKR-loop motif is present at residues 299-302; it reads KRKR. S305 carries the phosphoserine; by CDK1 and PKB modification. 5-glutamyl glutamate is present on E314. D319 serves as a coordination point for GTP. D319 serves as a coordination point for Mg(2+). Residue D319 participates in 2',3'-cGAMP binding. Residues 341–382 form an interaction with collided ribosomes region; that stretch reads QNWLSAKVRKQLRLKPFYLVPKHAKEGNGFQEETWRLSFSHI. K347 is covalently cross-linked (Glycyl lysine isopeptide (Lys-Gly) (interchain with G-Cter in SUMO); alternate). Residue K347 forms a Glycyl lysine isopeptide (Lys-Gly) (interchain with G-Cter in ubiquitin); alternate linkage. 2',3'-cGAMP contacts are provided by K362 and R376. 376–383 contributes to the GTP binding site; the sequence is RLSFSHIE. 380-383 is a binding site for ATP; that stretch reads SHIE. At K384 the chain carries N6-acetyllysine. A Glycyl lysine isopeptide (Lys-Gly) (interchain with G-Cter in SUMO); alternate cross-link involves residue K384. A Glycyl lysine isopeptide (Lys-Gly) (interchain with G-Cter in ubiquitin); alternate cross-link involves residue K384. The DNA-binding stretch occupies residues 384–407; it reads KEILNNHGKSKTCCENKEEKCCRK. N389 carries the post-translational modification (Microbial infection) Deamidated asparagine; by herpes simplex virus 1/HHV-1 UL37. H390 lines the Zn(2+) pocket. An N6-acetyllysine mark is found at K392 and K394. A Glycyl lysine isopeptide (Lys-Gly) (interchain with G-Cter in SUMO) cross-link involves residue K394. Residues C396, C397, and C404 each coordinate Zn(2+). Residues C404 and C405 are each lipidated (S-palmitoyl cysteine). Residues K411, K414, K427, and K428 each participate in a glycyl lysine isopeptide (Lys-Gly) (interchain with G-Cter in ubiquitin) cross-link. The residue at position 414 (K414) is an N6-acetyllysine. K414 is a binding site for ATP. Positions 427–429 match the KKH-loop motif; that stretch reads KKH. S434 and S435 each carry phosphoserine. Residue 435–439 coordinates ATP; it reads SYHVK. 2 positions are modified to (Microbial infection) Deamidated glutamine; by herpes simplex virus 1/HHV-1 UL37: Q451 and Q454. C474 carries S-palmitoyl cysteine lipidation. K479 participates in a covalent cross-link: Glycyl lysine isopeptide (Lys-Gly) (interchain with G-Cter in SUMO); alternate. K479 participates in a covalent cross-link: Glycyl lysine isopeptide (Lys-Gly) (interchain with G-Cter in ubiquitin); alternate. K506 carries the post-translational modification N6-methyllysine.

It belongs to the mab-21 family. In terms of assembly, monomer in the absence of DNA. Homodimer in presence of dsDNA: forms a 2:2 dimer with two enzymes binding to two DNA molecules. Interacts with nucleosomes; interaction is mainly mediated via histones H2A and H2B and inactivates the nucleotidyltransferase activity by blocking DNA-binding and subsequent activation. Interacts with PQBP1 (via WW domain). Interacts with TRIM14; this interaction recruits USP14, leading to deubiquitinate and stabilize CGAS and promote type I interferon production. Interacts with ZCCHC3; promoting sensing of dsDNA by CGAS. Interacts (when not monomethylated) with (poly-ADP-ribosylated) PARP1; interaction takes place in the nucleus and prevents the formation of the PARP1-TIMELESS complex. Interacts (when monomethylated) with SGF29; interaction with SGF29 prevents interaction with PARP1. Interacts with PCBP2; preventing the formation of liquid-like droplets in which CGAS is activated. Interacts with IRGM; promoting CGAS degradation. Interacts with DDX41. (Microbial infection) Interacts with herpes virus 8/HHV-8 protein ORF52; this interaction inhibits cGAS enzymatic activity by preventing the formation of liquid-like droplets by CGAS. As to quaternary structure, (Microbial infection) Interacts with herpes simplex virus 1 protein UL37; this interaction deaminates CGAS and inhibits its activation. In terms of assembly, (Microbial infection) Interacts with vaccinia virus protein OPG067; this interaction promotes CGAS proteasomal degradation. (Microbial infection) Interacts with cytomegalovirus protein UL31; this interaction promotes dissociation of DNA from CGAS, thereby inhibiting the enzymatic activity of CGAS. As to quaternary structure, (Microbial infection) Interacts with herpes simplex virus 1 tegument protein VP22 (UL49); this interaction inhibits cGAS enzymatic activity by preventing the formation of liquid-like droplets by CGAS. In terms of assembly, (Microbial infection) Interacts with herpesvirus 3 tegument protein VP22 (ORF9); this interaction inhibits cGAS enzymatic activity by preventing the formation of liquid-like droplets by CGAS. (Microbial infection) Interacts with human cytomegalovirus proteins UL42 and UL83; these interactions result in the inhibition of cGAS-STING signaling. Mg(2+) serves as cofactor. It depends on Mn(2+) as a cofactor. The cofactor is Zn(2+). The N-terminal disordered part (1-160) is phosphorylated by AURKB during the G2-M transition, blocking CGAS liquid phase separation and preventing activation. Phosphorylation at Tyr-215 by BLK promotes cytosolic retention. Localizes into the nucleus following dephosphorylation at Tyr-215. Phosphorylation at Ser-435 activates the nucleotidyltransferase activity. Dephosphorylation at Ser-435 by PPP6C impairs its ability to bind GTP, thereby inactivating it. Phosphorylation at Thr-68 and Ser-213 by PRKDC inhibits its cyclic GMP-AMP synthase activity by impairing homodimerization and activation. Phosphorylation at Ser-305 by AKT (AKT1, AKT2 or AKT3) suppresses the nucleotidyltransferase activity. Phosphorylation at Ser-305 by CDK1 during mitosis leads to its inhibition, thereby preventing CGAS activation by self-DNA during mitosis. Dephosphorylated at Ser-305 by protein phosphatase PP1 upon mitotic exit. In terms of processing, ubiquitinated at Lys-414 via 'Lys-48'-linked polyubiquitin chains, leading to its SQSTM1-mediated autophagic degradation. Interaction with TRIM14 promotes recruitment of USP14, leading to deubiquitinate Lys-414 and stabilize CGAS. Ubiquitinated at Lys-173 and Lys-384 by RNF185 via 'Lys-27'-linked polyubiquitination, promoting CGAS cyclic GMP-AMP synthase activity. Monoubiquitination at Lys-347 by TRIM56 promotes oligomerization and subsequent activation. Monoubiquitination by TRIM41 promotes CGAS activation. Ubiquitination at Lys-285 and Lys-479 via 'Lys-48'-linked polyubiquitination promotes its degradation. Deubiquitination at Lys-285 by USP29 promotes its stabilization. Deubiquitinated by USP27X, promoting its stabilization. Ubiquitinated at Lys-411 via 'Lys-63'-linked polyubiquitin chains by MARCHF8, leading to the inhibition of its DNA binding ability. In cycling cells, nucleosome-bound CGAS is ubiquitinated at Lys-427 and Lys-428 via 'Lys-48'-linked polyubiquitin chains by the ECS(SPSB3) complex, leading to its degradation: ubiquitination and degradation of nuclear CGAS during G1 and G2 phases is required to promote low intranuclear CGAS abundance before the next mitotic cycle. Post-translationally, sumoylated at Lys-231 and Lys-479 by TRIM38 in uninfected cells and during the early phase of viral infection, promoting its stability by preventing ubiquitination at Lys-285 and Lys-479, and subsequent degradation. Desumoylated by SENP2 during the late phase of viral infection. Sumoylation at Lys-347, Lys-384 and Lys-394 prevents DNA-binding, oligomerization and nucleotidyltransferase activity. Desumoylation at Lys-347, Lys-384 and Lys-394 by SENP7 relieves inhibition and activates CGAS. Polyglutamylated by TTLL6 at Glu-286, leading to impair DNA-binding activity. Monoglutamylated at Glu-314 by TTLL4, leading to impair the nucleotidyltransferase activity. Deglutamylated by AGBL5/CCP5 and AGBL6/CCP6. In terms of processing, acetylation at Lys-384, Lys-394 and Lys-414 inhibits the cyclic GMP-AMP synthase activity. Deacetylated upon cytosolic DNA challenge such as viral infections. Acetylation can be mediated by aspirin (acetylsalicylate) drug, which directly acetylates CGAS. Acetylation by aspirin efficiently inhibits CGAS-mediated immune responses and is able to suppress self-DNA-induced autoimmunity. Acetylation at Lys-47, Lys-56, Lys-62 and Lys-83 by KAT5 increases the cyclic GMP-AMP synthase activity by promoting DNA-binding and subsequent activation. Post-translationally, proteolytically cleaved by apoptotic caspases during apoptosis, leading to its inactivation. The damage of the nucleus and the mitochondria during apoptosis leads to leakage of nuclear and mitochondrial DNA, which activate CGAS: cleavage and inactivation during apoptosis in required to prevent cytokine overproduction. Cleaved by CASP3 at Asp-319 during virus-induced apoptosis, thereby inactivating it and preventing cytokine overproduction. Cleaved by CASP1 at Asp-140 and Asp-157 upon DNA virus infection; the cleavage impairs cGAMP production. Also cleaved by the pyroptotic CASP4 and CASP5 during non-canonical inflammasome activation; they don't cut at the same sites than CASP1. Degraded via selective autophagy following interaction with IRGM. IRGM promotes CGAS recruitment to autophagosome membranes, promoting its SQSTM1/p62-dependent autophagic degradation. In terms of processing, poly-ADP-ribosylation at Asp-191 by PARP1 impairs DNA-binding, thereby preventing the cyclic GMP-AMP synthase activity. Post-translationally, palmitoylation at Cys-474 by ZDHHC18 impairs DNA-binding, thereby preventing the cyclic GMP-AMP synthase activity. Palmitoylation at Cys-404 and Cys-405 by ZDHHC9 promotes homodimerization and cyclic GMP-AMP synthase activity. Depalmitoylation at Cys-404 and Cys-405 by LYPLAL1 impairs homodimerization and cyclic GMP-AMP synthase activity. Monomethylated at Lys-506 by SETD7. Monomethylation promotes interaction with SGF29, preventing interaction between PARP1 nad SGF29. Demethylation by RIOX1 promotes interaction with PARP1, followed by PARP1 inactivation. In terms of processing, lactylation by AARS2 prevents ability to undergo liquid-liquid phase separation (LLPS), thereby inhibiting CGAS activation. Post-translationally, (Microbial infection) Deamidated on 'Asn-210' by herpes simplex virus 1 protein UL37. This modification significantly reduces CGAS-dependent cGAMP production and innate immune signaling induced by dsDNA. (Microbial infection) Degraded by an autophagy-mediated mechanism in presence of Chikungunya virus capsid protein. Expressed in the monocytic cell line THP1.

It is found in the nucleus. Its subcellular location is the chromosome. The protein localises to the cell membrane. It localises to the cytoplasm. The protein resides in the cytosol. The catalysed reaction is GTP + ATP = 2',3'-cGAMP + 2 diphosphate. It catalyses the reaction GTP + ATP = pppGp(2'-5')A + diphosphate. The enzyme catalyses pppGp(2'-5')A = 2',3'-cGAMP + diphosphate. Its activity is regulated as follows. The enzyme activity is strongly increased by double-stranded DNA (dsDNA), but not by single-stranded DNA or RNA. DNA-binding induces the formation of liquid-like droplets in which CGAS is activated. Liquid-like droplets also create a selective environment that restricts entry of negative regulators, such as TREX1 or BANF1/BAF, allowing sensing of DNA. A number of mechanisms exist to restrict its activity toward self-DNA. The nucleotidyltransferase activity is inhibited in the nucleus via its association with nucleosomes: interacts with the acidic patch of histones H2A and H2B, thereby blocking DNA-binding and subsequent activation. CGAS is also inactive when associated with mitotic chromatin. Chromatin-bound CGAS cannot be activated by exogenous DNA in mitotic cells: phosphorylation of the N-terminal disordered part by AURKB during the G2-M transition blocks CGAS liquid phase separation and activation. Activity toward self-DNA is inhibited by BANF1/BAF upon acute loss of nuclear membrane integrity: BANF1/BAF acts by outcompeting CGAS for DNA-binding, thereby preventing CGAS activation. DNA-induced activation at micronuclei is also limited by TREX1, which degrades micronuclear DNA upon nuclear envelope rupture, thereby preventing CGAS activation. CGAS can be released from nucleosomes and activated by MRE11 component of the MRN complex, which displaces CGAS from acidic-patch-mediated sequestration. Acetylation at Lys-384, Lys-394 and Lys-414 inhibits the cyclic GMP-AMP synthase activity. Inhibited by aspirin (acetylsalicylate) drug, which acetylates CGAS. Acetylation by KAT5 increases the cyclic GMP-AMP synthase activity by promoting DNA-binding and subsequent activation. Phosphorylation at Ser-305 suppresses the nucleotidyltransferase activity. Phosphorylation at Ser-435 promotes the cyclic GMP-AMP synthase activity. Phosphorylation at Thr-68 and Ser-213 inhibits its cyclic GMP-AMP synthase activity. Ubiquitination at Lys-173 and Lys-384 via 'Lys-27'-linked polyubiquitination enhances the cyclic GMP-AMP synthase activity. Monoubiquitination at Lys-347 promotes oligomerization and subsequent activation. Sumoylation at Lys-347, Lys-384 and Lys-394 prevents DNA-binding, oligomerization and nucleotidyltransferase activity. The enzyme activity is impaired by the cleavage at Asp-140 and Asp-157 produced by CASP1. In addition to DNA, also activated by collided ribosomes upon translation stress: specifically binds collided ribosomes, promoting its activation and triggering type-I interferon production. Strongly inhibited by compound PF-06928215, which is specific for human protein. Inhibited by small-molecule inhibitors with a pyridoindole tricyclic core G108, G140 and G150. With respect to regulation, (Microbial infection) Nucleotidyltransferase activity is inhibited by different herpesvirus tegument proteins (Herpes simplex virus 1 tegument protein VP22, herpes virus 8 protein ORF52 and herpesvirus 3 tegument protein VP22/ORF9). Viral tegument proteins act by disrupting liquid-like droplets in which CGAS is activated, thereby preventing CGAS activity. Functionally, nucleotidyltransferase that catalyzes the formation of cyclic GMP-AMP (2',3'-cGAMP) from ATP and GTP and plays a key role in innate immunity. Catalysis involves both the formation of a 2',5' phosphodiester linkage at the GpA step and the formation of a 3',5' phosphodiester linkage at the ApG step, producing c[G(2',5')pA(3',5')p]. Acts as a key DNA sensor: directly binds double-stranded DNA (dsDNA), inducing the formation of liquid-like droplets in which CGAS is activated, leading to synthesis of 2',3'-cGAMP, a second messenger that binds to and activates STING1, thereby triggering type-I interferon production. Preferentially recognizes and binds curved long dsDNAs of a minimal length of 40 bp. Acts as a key foreign DNA sensor, the presence of double-stranded DNA (dsDNA) in the cytoplasm being a danger signal that triggers the immune responses. Has antiviral activity by sensing the presence of dsDNA from DNA viruses in the cytoplasm. Also acts as an innate immune sensor of infection by retroviruses, such as HIV-2, by detecting the presence of reverse-transcribed DNA in the cytosol. In contrast, HIV-1 is poorly sensed by CGAS, due to its capsid that cloaks viral DNA from CGAS detection. Detection of retroviral reverse-transcribed DNA in the cytosol may be indirect and be mediated via interaction with PQBP1, which directly binds reverse-transcribed retroviral DNA. Also detects the presence of DNA from bacteria, such as M.tuberculosis. 2',3'-cGAMP can be transferred from producing cells to neighboring cells through gap junctions, leading to promote STING1 activation and convey immune response to connecting cells. 2',3'-cGAMP can also be transferred between cells by virtue of packaging within viral particles contributing to IFN-induction in newly infected cells in a cGAS-independent but STING1-dependent manner. Also senses the presence of neutrophil extracellular traps (NETs) that are translocated to the cytosol following phagocytosis, leading to synthesis of 2',3'-cGAMP. In addition to foreign DNA, can also be activated by endogenous nuclear or mitochondrial DNA. When self-DNA leaks into the cytosol during cellular stress (such as mitochondrial stress, SARS-CoV-2 infection causing severe COVID-19 disease, DNA damage, mitotic arrest or senescence), or is present in form of cytosolic micronuclei, CGAS is activated leading to a state of sterile inflammation. Acts as a regulator of cellular senescence by binding to cytosolic chromatin fragments that are present in senescent cells, leading to trigger type-I interferon production via STING1 and promote cellular senescence. Also involved in the inflammatory response to genome instability and double-stranded DNA breaks: acts by localizing to micronuclei arising from genome instability. Micronuclei, which are frequently found in cancer cells, consist of chromatin surrounded by their own nuclear membrane: following breakdown of the micronuclear envelope, a process associated with chromothripsis, CGAS binds self-DNA exposed to the cytosol, leading to 2',3'-cGAMP synthesis and subsequent activation of STING1 and type-I interferon production. Activated in response to prolonged mitotic arrest, promoting mitotic cell death. In a healthy cell, CGAS is however kept inactive even in cellular events that directly expose it to self-DNA, such as mitosis, when cGAS associates with chromatin directly after nuclear envelope breakdown or remains in the form of postmitotic persistent nuclear cGAS pools bound to chromatin. Nuclear CGAS is inactivated by chromatin via direct interaction with nucleosomes, which block CGAS from DNA binding and thus prevent CGAS-induced autoimmunity. Also acts as a suppressor of DNA repair in response to DNA damage: inhibits homologous recombination repair by interacting with PARP1, the CGAS-PARP1 interaction leading to impede the formation of the PARP1-TIMELESS complex. In addition to DNA, also sense translation stress: in response to translation stress, translocates to the cytosol and associates with collided ribosomes, promoting its activation and triggering type-I interferon production. In contrast to other mammals, human CGAS displays species-specific mechanisms of DNA recognition and produces less 2',3'-cGAMP, allowing a more fine-tuned response to pathogens. The sequence is that of Cyclic GMP-AMP synthase from Homo sapiens (Human).